Consider the following 200-residue polypeptide: Acyl-homoserine-lactone synthase (200 aa).

Belongs to the autoinducer synthase family.

The enzyme catalyses a fatty acyl-[ACP] + S-adenosyl-L-methionine = an N-acyl-L-homoserine lactone + S-methyl-5'-thioadenosine + holo-[ACP] + H(+). In terms of biological role, required for the synthesis of BHL (N-butanoyl-L-homoserine lactone). The protein is Acyl-homoserine-lactone synthase (swrI) of Serratia liquefaciens.